The sequence spans 303 residues: Aspartate carbamoyltransferase catalytic subunit (303 aa).

The carbamoyl phosphate site is built by arginine 49 and threonine 50. Residue lysine 77 coordinates L-aspartate. Carbamoyl phosphate-binding residues include arginine 99, histidine 126, and glutamine 129. L-aspartate contacts are provided by arginine 159 and arginine 211. Positions 252 and 253 each coordinate carbamoyl phosphate.

The protein belongs to the aspartate/ornithine carbamoyltransferase superfamily. ATCase family. As to quaternary structure, heterododecamer (2C3:3R2) of six catalytic PyrB chains organized as two trimers (C3), and six regulatory PyrI chains organized as three dimers (R2).

The enzyme catalyses carbamoyl phosphate + L-aspartate = N-carbamoyl-L-aspartate + phosphate + H(+). Its pathway is pyrimidine metabolism; UMP biosynthesis via de novo pathway; (S)-dihydroorotate from bicarbonate: step 2/3. Functionally, catalyzes the condensation of carbamoyl phosphate and aspartate to form carbamoyl aspartate and inorganic phosphate, the committed step in the de novo pyrimidine nucleotide biosynthesis pathway. The chain is Aspartate carbamoyltransferase catalytic subunit from Listeria innocua serovar 6a (strain ATCC BAA-680 / CLIP 11262).